Consider the following 156-residue polypeptide: Transcription elongation factor GreA (156 aa).

A coiled-coil region spans residues 12–72 (YKKLEDELST…KEIEHELKYA (61 aa)).

This sequence belongs to the GreA/GreB family.

Functionally, necessary for efficient RNA polymerase transcription elongation past template-encoded arresting sites. The arresting sites in DNA have the property of trapping a certain fraction of elongating RNA polymerases that pass through, resulting in locked ternary complexes. Cleavage of the nascent transcript by cleavage factors such as GreA or GreB allows the resumption of elongation from the new 3'terminus. GreA releases sequences of 2 to 3 nucleotides. This Dehalococcoides mccartyi (strain ATCC BAA-2266 / KCTC 15142 / 195) (Dehalococcoides ethenogenes (strain 195)) protein is Transcription elongation factor GreA.